A 310-amino-acid chain; its full sequence is Bis(hydroxyethyl) terephthalate hydrolase (310 aa).

The tat-type signal signal peptide spans 1–48; that stretch reads MQQNPHTHAAPGAARPVLRGVRRRLAAVTAAVAAVLVLGTLTGPGAQA. Position 111 (phenylalanine 111) interacts with bis(2-hydroxyethyl) terephthalate. Residue serine 179 is the Nucleophile of the active site. Residues methionine 180 and tryptophan 204 each contribute to the bis(2-hydroxyethyl) terephthalate site. Residues aspartate 225 and histidine 257 each act as charge relay system in the active site. Cysteines 290 and 306 form a disulfide.

Belongs to the AB hydrolase superfamily. Predicted to be exported by the Tat system. The position of the signal peptide cleavage has not been experimentally proven.

It is found in the secreted. The catalysed reaction is bis(2-hydroxyethyl) terephthalate + H2O = 4-[(2-hydroxyethoxy)carbonyl]benzoate + ethylene glycol + H(+). Catalyzes the degradation of bis(hydroxyethyl) terephthalate (BHET), a derived-oligomer of the plastic poly(ethylene terephthalate) (PET), hydrolyzing BHET to mono(2-hydroxyethyl) terephthalate (MHET). Shows no activity against PET. The protein is Bis(hydroxyethyl) terephthalate hydrolase of Streptomyces coelicolor (strain ATCC BAA-471 / A3(2) / M145).